Consider the following 116-residue polypeptide: Ribosome-binding factor A (116 aa).

Belongs to the RbfA family. In terms of assembly, monomer. Binds 30S ribosomal subunits, but not 50S ribosomal subunits or 70S ribosomes.

It is found in the cytoplasm. In terms of biological role, one of several proteins that assist in the late maturation steps of the functional core of the 30S ribosomal subunit. Associates with free 30S ribosomal subunits (but not with 30S subunits that are part of 70S ribosomes or polysomes). Required for efficient processing of 16S rRNA. May interact with the 5'-terminal helix region of 16S rRNA. The protein is Ribosome-binding factor A of Malacoplasma penetrans (strain HF-2) (Mycoplasma penetrans).